Consider the following 161-residue polypeptide: Crossover junction endodeoxyribonuclease RuvC (161 aa).

Active-site residues include Asp-7, Glu-67, and Asp-140. Positions 7, 67, and 140 each coordinate Mg(2+).

It belongs to the RuvC family. In terms of assembly, homodimer which binds Holliday junction (HJ) DNA. The HJ becomes 2-fold symmetrical on binding to RuvC with unstacked arms; it has a different conformation from HJ DNA in complex with RuvA. In the full resolvosome a probable DNA-RuvA(4)-RuvB(12)-RuvC(2) complex forms which resolves the HJ. Mg(2+) is required as a cofactor.

It localises to the cytoplasm. The catalysed reaction is Endonucleolytic cleavage at a junction such as a reciprocal single-stranded crossover between two homologous DNA duplexes (Holliday junction).. Its function is as follows. The RuvA-RuvB-RuvC complex processes Holliday junction (HJ) DNA during genetic recombination and DNA repair. Endonuclease that resolves HJ intermediates. Cleaves cruciform DNA by making single-stranded nicks across the HJ at symmetrical positions within the homologous arms, yielding a 5'-phosphate and a 3'-hydroxyl group; requires a central core of homology in the junction. The consensus cleavage sequence is 5'-(A/T)TT(C/G)-3'. Cleavage occurs on the 3'-side of the TT dinucleotide at the point of strand exchange. HJ branch migration catalyzed by RuvA-RuvB allows RuvC to scan DNA until it finds its consensus sequence, where it cleaves and resolves the cruciform DNA. The sequence is that of Crossover junction endodeoxyribonuclease RuvC from Natranaerobius thermophilus (strain ATCC BAA-1301 / DSM 18059 / JW/NM-WN-LF).